The chain runs to 503 residues: Cytochrome P450 monooxygenase ecdH (503 aa).

Residues 8–24 form a helical membrane-spanning segment; sequence TTLLCGVISSTLLLLLL. 3 N-linked (GlcNAc...) asparagine glycosylation sites follow: Asn64, Asn324, and Asn413. Cys449 lines the heme pocket.

Belongs to the cytochrome P450 family. It depends on heme as a cofactor.

Its subcellular location is the membrane. It functions in the pathway antifungal biosynthesis. Functionally, cytochrome P450 monooxygenase; part of the gene cluster that mediates the biosynthesis of echinocandin B, a fungal lipidated cyclic hexapeptide that acts as an antifungal agent. Linoleoyl-AMP, produced by the fatty-acyl-AMP ligase ecdI, is transferred to the initiation carrier domain (T0) of ecdA. The linoleoyl-S-phosphopantetheinyl-T0 is sequentially extended with L-ornithine, L-threonine, L-proline, L-homotyrosine, L-threonine, and 4R-methyl-L-proline to form the linear hexapeptide. Thereafter, the terminal condensation (C7) performs macrocyclization of the NRPS product and the cyclic scaffold is released from ecdA. All six of the amino acid residues are hydroxylated, including 4R,5R-dihydroxy-L-ornithine, 4R-hydroxyl-L-proline, 3S,4S-dihydroxy-L-homotyrosine, and 3S-hydroxyl-4S-methyl-L-prolin. In the pathway, all the hydroxylation reactions are proposed to occur following completion of the cyclic peptide, so the unhydroxylated precursor produced by ecdA will undergo six rounds of hydroxylation. Five hydroxylase genes (ecdG, ecdH, ecdK, htyE and htyF) are embedded within the echinocandin B (ecd) and L-homotyrosine (hty) clusters. This chain is Cytochrome P450 monooxygenase ecdH, found in Aspergillus rugulosus (Emericella rugulosa).